The sequence spans 270 residues: 4-hydroxy-tetrahydrodipicolinate reductase (270 aa).

NAD(+) is bound by residues glycine 8–methionine 13, aspartate 34, glycine 102–threonine 104, and serine 128–tyrosine 131. Histidine 160 functions as the Proton donor/acceptor in the catalytic mechanism. Histidine 161 is a (S)-2,3,4,5-tetrahydrodipicolinate binding site. Lysine 164 (proton donor) is an active-site residue. Glycine 170–threonine 171 is a binding site for (S)-2,3,4,5-tetrahydrodipicolinate.

Belongs to the DapB family.

It is found in the cytoplasm. It catalyses the reaction (S)-2,3,4,5-tetrahydrodipicolinate + NAD(+) + H2O = (2S,4S)-4-hydroxy-2,3,4,5-tetrahydrodipicolinate + NADH + H(+). The enzyme catalyses (S)-2,3,4,5-tetrahydrodipicolinate + NADP(+) + H2O = (2S,4S)-4-hydroxy-2,3,4,5-tetrahydrodipicolinate + NADPH + H(+). It functions in the pathway amino-acid biosynthesis; L-lysine biosynthesis via DAP pathway; (S)-tetrahydrodipicolinate from L-aspartate: step 4/4. Its function is as follows. Catalyzes the conversion of 4-hydroxy-tetrahydrodipicolinate (HTPA) to tetrahydrodipicolinate. The chain is 4-hydroxy-tetrahydrodipicolinate reductase from Methanococcus maripaludis (strain DSM 14266 / JCM 13030 / NBRC 101832 / S2 / LL).